Consider the following 67-residue polypeptide: Conotoxin TsMMSK-B021 (67 aa).

The N-terminal stretch at 1-20 (MMSKLGVLLTICLLLFPLTA) is a signal peptide. Residues 21-50 (VQLDGDQPADLPELRAQDFAPERSPWFDPV) constitute a propeptide that is removed on maturation. 3 disulfides stabilise this stretch: cysteine 53–cysteine 65, cysteine 54–cysteine 61, and cysteine 58–cysteine 64. Proline 63 carries the 4-hydroxyproline modification.

It belongs to the conotoxin M superfamily. As to expression, expressed by the venom duct.

It is found in the secreted. The polypeptide is Conotoxin TsMMSK-B021 (Conus tessulatus (Tessellate cone)).